The following is a 57-amino-acid chain: Large ribosomal subunit protein bL32 (57 aa).

The protein belongs to the bacterial ribosomal protein bL32 family.

This Staphylococcus saprophyticus subsp. saprophyticus (strain ATCC 15305 / DSM 20229 / NCIMB 8711 / NCTC 7292 / S-41) protein is Large ribosomal subunit protein bL32.